The chain runs to 320 residues: Adhesin MafA 1 (320 aa).

The first 18 residues, 1-18 (MQARLLIPILFSVFILSA), serve as a signal peptide directing secretion. C19 is lipidated: N-palmitoyl cysteine. A lipid anchor (S-diacylglycerol cysteine) is attached at C19. The interval 288-320 (HMGNSAPSVEADNSHEGYGYSDEAVRRHRQGQP) is disordered.

This sequence belongs to the MafA family.

The protein resides in the cell outer membrane. This chain is Adhesin MafA 1 (mafA1), found in Neisseria meningitidis serogroup A / serotype 4A (strain DSM 15465 / Z2491).